We begin with the raw amino-acid sequence, 523 residues long: MPGINGAGPSNFFWQWRTDGEPVTEREHDSSRSASSANSPEFPPPASPAESGRQRLLRSSALSRQTREWLEATPARVQGATPPAEARQSPEAQQAERIVQELVRGGADLNNVRTMLRNVMDNNAVAFSRVERDILLQHFPNMLMTGISSDSVLANELRQRLRQTVRQQRIQSSTPARLADSSSGSSQRSLIGRSTMLMTPGRSSSSSAAASRTSVDRHPQGLDLESNEVLRRLTQEGVDMERLRTSLGRYIMSLEPLPPDLRRALESVGINPFMPEDLSLVDHPVLNFSAALNRMLASRQTTTNSPELPPLASSAESGRRRLLRSPPLLSGQREWIEQNMRQEAEPQSSRLNRAVRLAVMPPQNENEDNVAYAIRLRRLNPGADVSRVVASFITDPAARQQVVNDIRAALDIAPQFSQLRTISKADAESEELGFRDAADHPDNATSCLFGEELSLSNPDQQVIGLAVNPTDKPQPYSQEVNKALTFMDMKKLAQYLADKPEHPLNRQRLDAKNIAKYAFKIVP.

Disordered stretches follow at residues 1–94 (MPGI…EAQQ), 165–223 (VRQQ…QGLD), and 299–320 (RQTT…SGRR). Residues 18-31 (TDGEPVTEREHDSS) are compositionally biased toward basic and acidic residues. The segment covering 181–194 (SSSGSSQRSLIGRS) has biased composition (low complexity).

The protein belongs to the HopAB family.

Its subcellular location is the secreted. Effector protein that plays different roles depending on the species and plant cultivars that interact with the pathogen. Acts as a virulence determinant by enhancing the development of disease symptoms and bacterial growth. Acts as an avirulence factor by eliciting hypersensitive response (HR) and plant resistance. The sequence is that of Effector protein hopAB1 (hopAB1) from Pseudomonas savastanoi pv. glycinea (Pseudomonas syringae pv. glycinea).